Reading from the N-terminus, the 93-residue chain is Small ribosomal subunit protein uS19 (93 aa).

This sequence belongs to the universal ribosomal protein uS19 family.

Its function is as follows. Protein S19 forms a complex with S13 that binds strongly to the 16S ribosomal RNA. In Ligilactobacillus salivarius (strain UCC118) (Lactobacillus salivarius), this protein is Small ribosomal subunit protein uS19.